The primary structure comprises 500 residues: Glycerol kinase (500 aa).

Position 11 (Thr11) interacts with ADP. Residues Thr11, Thr12, and Ser13 each contribute to the ATP site. Sn-glycerol 3-phosphate is bound at residue Thr11. Arg15 contributes to the ADP binding site. 4 residues coordinate sn-glycerol 3-phosphate: Arg81, Glu82, Tyr133, and Asp242. Residues Arg81, Glu82, Tyr133, Asp242, and Gln243 each coordinate glycerol. Residues Thr264 and Gly307 each coordinate ADP. Residues Thr264, Gly307, Gln311, and Gly411 each contribute to the ATP site. Residue Gly411 participates in ADP binding.

This sequence belongs to the FGGY kinase family.

The catalysed reaction is glycerol + ATP = sn-glycerol 3-phosphate + ADP + H(+). Its pathway is polyol metabolism; glycerol degradation via glycerol kinase pathway; sn-glycerol 3-phosphate from glycerol: step 1/1. Inhibited by fructose 1,6-bisphosphate (FBP). Key enzyme in the regulation of glycerol uptake and metabolism. Catalyzes the phosphorylation of glycerol to yield sn-glycerol 3-phosphate. This chain is Glycerol kinase, found in Bradyrhizobium sp. (strain BTAi1 / ATCC BAA-1182).